Consider the following 210-residue polypeptide: Pyridoxine/pyridoxamine 5'-phosphate oxidase (210 aa).

Residues 7 to 10 (REDY) and K65 each bind substrate. Residues 60-65 (RMVLLK), 75-76 (FT), R81, K82, and Q104 contribute to the FMN site. Substrate is bound by residues Y122, R126, and S130. FMN-binding positions include 139-140 (QS) and W183. 189–191 (RLH) contacts substrate. Residue R193 participates in FMN binding.

It belongs to the pyridoxamine 5'-phosphate oxidase family. In terms of assembly, homodimer. FMN serves as cofactor.

The catalysed reaction is pyridoxamine 5'-phosphate + O2 + H2O = pyridoxal 5'-phosphate + H2O2 + NH4(+). The enzyme catalyses pyridoxine 5'-phosphate + O2 = pyridoxal 5'-phosphate + H2O2. It participates in cofactor metabolism; pyridoxal 5'-phosphate salvage; pyridoxal 5'-phosphate from pyridoxamine 5'-phosphate: step 1/1. It functions in the pathway cofactor metabolism; pyridoxal 5'-phosphate salvage; pyridoxal 5'-phosphate from pyridoxine 5'-phosphate: step 1/1. Its function is as follows. Catalyzes the oxidation of either pyridoxine 5'-phosphate (PNP) or pyridoxamine 5'-phosphate (PMP) into pyridoxal 5'-phosphate (PLP). The protein is Pyridoxine/pyridoxamine 5'-phosphate oxidase of Neisseria meningitidis serogroup B (strain ATCC BAA-335 / MC58).